The sequence spans 554 residues: Perforin-1 (554 aa).

The N-terminal stretch at 1–20 (MAAYLFLLGLFLLLPRPVPA) is a signal peptide. Disulfide bonds link Cys-22-Cys-75, Cys-30-Cys-72, and Cys-101-Cys-175. One can recognise an MACPF domain in the interval 26 to 374 (TRSECKQNHK…HYVMSRARWR (349 aa)). The beta stranded transmembrane segment at 128 to 148 (WRAGLDVNPKPEANVHVSVAG) threads the bilayer. Asn-204 is a glycosylation site (N-linked (GlcNAc...) asparagine). Cystine bridges form between Cys-241–Cys-407, Cys-376–Cys-392, Cys-380–Cys-394, and Cys-396–Cys-406. A beta stranded membrane pass occupies residues 256–278 (CLSVEAQVSIGAQASVSSEYKAC). One can recognise an EGF-like domain in the interval 375-407 (DCNRPCRAGQHKSSRDSCQCVCQDSNVTNQDCC). The region spanning 395-513 (VCQDSNVTNQ…FHEVNCPLNH (119 aa)) is the C2 domain. Asn-400 is a glycosylation site (N-linked (GlcNAc...) asparagine). The Ca(2+) site is built by Gly-428, Asp-429, Thr-432, Asp-435, Asn-454, Asp-483, Ala-484, Asp-485, Trp-488, Asp-489, Asp-490, and Asp-491. Cystine bridges form between Cys-496–Cys-509 and Cys-524–Cys-533. Asn-548 carries N-linked (GlcNAc...) asparagine glycosylation.

The protein belongs to the complement C6/C7/C8/C9 family. Monomer, as soluble protein. Homooligomer; homooligomerizes to form a pore-forming ring. Ca(2+) serves as cofactor. In terms of processing, N-glycosylated. In terms of tissue distribution, detected in large granular lymphocytes and lymphokine-activated killer cells.

The protein resides in the cytolytic granule. Its subcellular location is the secreted. It is found in the cell membrane. It localises to the endosome lumen. In terms of biological role, pore-forming protein that plays a key role in granzyme-mediated programmed cell death, and in defense against virus-infected or neoplastic cells. Can insert into the membrane of target cells in its calcium-bound form, oligomerize and form large pores. Promotes cytolysis and apoptosis of target cells by mediating the passage and uptake of cytotoxic granzymes. Facilitates the delivery of cationic cargo protein, while anionic or neural proteins are not delivered efficiently. Perforin pores allow the release of mature caspase-7 (CASP7) into the extracellular milieu. The sequence is that of Perforin-1 (Prf1) from Rattus norvegicus (Rat).